A 455-amino-acid chain; its full sequence is Bifunctional protein GlmU (455 aa).

Positions 1-226 are pyrophosphorylase; sequence MSLEIVILAA…PMEVQGANDR (226 aa). Residues 8–11, K22, Q73, 78–79, 99–101, G136, E151, N166, and N224 each bind UDP-N-acetyl-alpha-D-glucosamine; these read LAAG, GT, and YGD. Position 101 (D101) interacts with Mg(2+). Mg(2+) is bound at residue N224. Residues 227–247 form a linker region; sequence KQLSELERHYQLRAGRRLMAQ. An N-acetyltransferase region spans residues 248 to 455; it reads GVTLRDPARF…WKRPEKIKKN (208 aa). The UDP-N-acetyl-alpha-D-glucosamine site is built by R330 and K348. H360 functions as the Proton acceptor in the catalytic mechanism. UDP-N-acetyl-alpha-D-glucosamine-binding residues include Y363 and N374. Residues A377, 383-384, S402, A420, and R437 each bind acetyl-CoA; that span reads NY.

The protein in the N-terminal section; belongs to the N-acetylglucosamine-1-phosphate uridyltransferase family. It in the C-terminal section; belongs to the transferase hexapeptide repeat family. As to quaternary structure, homotrimer. Mg(2+) serves as cofactor.

It is found in the cytoplasm. It catalyses the reaction alpha-D-glucosamine 1-phosphate + acetyl-CoA = N-acetyl-alpha-D-glucosamine 1-phosphate + CoA + H(+). The enzyme catalyses N-acetyl-alpha-D-glucosamine 1-phosphate + UTP + H(+) = UDP-N-acetyl-alpha-D-glucosamine + diphosphate. Its pathway is nucleotide-sugar biosynthesis; UDP-N-acetyl-alpha-D-glucosamine biosynthesis; N-acetyl-alpha-D-glucosamine 1-phosphate from alpha-D-glucosamine 6-phosphate (route II): step 2/2. The protein operates within nucleotide-sugar biosynthesis; UDP-N-acetyl-alpha-D-glucosamine biosynthesis; UDP-N-acetyl-alpha-D-glucosamine from N-acetyl-alpha-D-glucosamine 1-phosphate: step 1/1. It participates in bacterial outer membrane biogenesis; LPS lipid A biosynthesis. Its function is as follows. Catalyzes the last two sequential reactions in the de novo biosynthetic pathway for UDP-N-acetylglucosamine (UDP-GlcNAc). The C-terminal domain catalyzes the transfer of acetyl group from acetyl coenzyme A to glucosamine-1-phosphate (GlcN-1-P) to produce N-acetylglucosamine-1-phosphate (GlcNAc-1-P), which is converted into UDP-GlcNAc by the transfer of uridine 5-monophosphate (from uridine 5-triphosphate), a reaction catalyzed by the N-terminal domain. The sequence is that of Bifunctional protein GlmU from Pseudomonas fluorescens (strain Pf0-1).